The following is a 132-amino-acid chain: Small ribosomal subunit protein uS8 (132 aa).

It belongs to the universal ribosomal protein uS8 family. Part of the 30S ribosomal subunit. Contacts proteins S5 and S12.

In terms of biological role, one of the primary rRNA binding proteins, it binds directly to 16S rRNA central domain where it helps coordinate assembly of the platform of the 30S subunit. This Corynebacterium diphtheriae (strain ATCC 700971 / NCTC 13129 / Biotype gravis) protein is Small ribosomal subunit protein uS8.